The chain runs to 331 residues: MRPALAVGLVFAGCCSNVIFLELLARKHPGCGNIVTFAQFLFIAVEGFLFEADLGRKPPAIPIRYYAIMVTMFFTVSVVNNYALNLNIAMPLHMIFRSGSLIANMILGIIILKKRYSIFKYTSIALVSVGIFICTFMSAKQVTSQSSLSENDGFQAFVWWLLGIGALTFALLMSARMGIFQETLYKRFGKHSKEALFYNHALPLPGFVFLASDIYDHAVLFNKSELYEIPVIGVTLPIMWFYLLMNIITQYVCIRGVFILTTECASLTVTLVVTLRKFVSLIFSILYFQNPFTLWHWLGTLFVFIGTLMYTEVWNNLGTTKSEPQKDSKKN.

11 consecutive transmembrane segments (helical) span residues 4 to 24, 30 to 50, 59 to 79, 92 to 112, 117 to 137, 153 to 173, 201 to 221, 229 to 249, 251 to 267, 268 to 288, and 291 to 311; these read ALAV…LELL, GCGN…GFLF, PAIP…VSVV, LHMI…IIIL, SIFK…CTFM, GFQA…ALLM, ALPL…AVLF, IPVI…NIIT, YVCI…CASL, TVTL…ILYF, and PFTL…LMYT. A Mediates endoplasmic reticulum retention motif is present at residues 326 to 331; it reads KDSKKN.

Belongs to the nucleotide-sugar transporter family. SLC35B subfamily.

The protein localises to the endoplasmic reticulum membrane. The catalysed reaction is UDP-N-acetyl-alpha-D-glucosamine(in) + UDP-alpha-D-glucuronate(out) = UDP-N-acetyl-alpha-D-glucosamine(out) + UDP-alpha-D-glucuronate(in). The enzyme catalyses UDP-alpha-D-xylose(in) + UDP-alpha-D-glucuronate(out) = UDP-alpha-D-xylose(out) + UDP-alpha-D-glucuronate(in). Antiporter that transports nucleotide sugars across the endoplasmic reticulum (ER) membrane in exchange for another nucleotide sugar. May couple UDP-alpha-D-glucuronate (UDP-GlcA) or UDP-alpha-D-xylose (UDP-Xyl) efflux to UDP-alpha-D-glucuronate (UDP-GlcA) influx into the ER lumen, which in turn stimulates glucuronidation and excretion of endobiotics and xenobiotics. Functionally, has UDP-GlcA:UDP-GlcNAc antiporter activity. The sequence is that of Nucleotide sugar transporter SLC35B4 (SLC35B4) from Homo sapiens (Human).